The following is a 541-amino-acid chain: L-ornithine N(5)-monooxygenase (541 aa).

Residues 50-58 (EKQPEFQWH) and Gln69 each bind FAD. Substrate is bound at residue Lys74. 223–226 (SGQS) serves as a coordination point for NADP(+). Substrate is bound by residues 269 to 272 (NEIF) and Asn300. 300-302 (NYS) is a binding site for NADP(+). The disordered stretch occupies residues 430 to 474 (TEIPKGPDGSLFDASEEEATWRPASPITPASPSPPSTPTSSALSQ). Residue 520–522 (SLL) participates in FAD binding. Ser523 is a binding site for substrate.

The protein belongs to the lysine N(6)-hydroxylase/L-ornithine N(5)-oxygenase family. Homotetramer. FAD is required as a cofactor.

It carries out the reaction L-ornithine + NADPH + O2 = N(5)-hydroxy-L-ornithine + NADP(+) + H2O. It catalyses the reaction L-ornithine + NADH + O2 = N(5)-hydroxy-L-ornithine + NAD(+) + H2O. The protein operates within siderophore biosynthesis. Functionally, L-ornithine N(5)-monooxygenase; part of the siderophore basidioferrin biosynthetic pathway. The biosynthesis of basidioferrin depends on the hydroxylation of ornithine to N(5)-hydroxyornithine, catalyzed by the monooxygenase SMO1. The second step, the acylation of N(5)-hydroxy-L-ornithine is catalyzed by a not yet identified N-acyltransferase. Finally, assembly of basidioferrin is catalyzed by the nonribosomal peptide synthase (NRPS) NPS2 via amide bond formation between three L-AHO molecules to release the linear L-AHO trimer. The chain is L-ornithine N(5)-monooxygenase (SMO1) from Ceriporiopsis subvermispora (strain B) (White-rot fungus).